Here is a 279-residue protein sequence, read N- to C-terminus: MVWFKRAKPSIFTKDKRDMPEGLWWKCESCGAMLHKKQVEDHFYTCCECGYHFRLSPYQYFSLLFDEKKYDEFDDNLRAADPLHFSDTRKYPDRVHDILEKTGKTEACRNAIGRVSGHDLVISAMDFGFIGGSMGSVVGEKISRAVSKSIEHNAPLLIISQSGGARMMEGAFSLMQMAKTSARLSQLSARGIPYISLMTNPTMGGTSASYAMLGDINISEPKALIGFAGPRVIRDTIKRDLPEGFQRAEFLLEHGFLDCIVHRRDLKHRLSQILGHLSS.

The CoA carboxyltransferase N-terminal domain maps to 23–279 (LWWKCESCGA…LSQILGHLSS (257 aa)). Residues Cys27, Cys30, Cys46, and Cys49 each contribute to the Zn(2+) site. The C4-type zinc finger occupies 27-49 (CESCGAMLHKKQVEDHFYTCCEC).

The protein belongs to the AccD/PCCB family. In terms of assembly, acetyl-CoA carboxylase is a heterohexamer composed of biotin carboxyl carrier protein (AccB), biotin carboxylase (AccC) and two subunits each of ACCase subunit alpha (AccA) and ACCase subunit beta (AccD). The cofactor is Zn(2+).

It is found in the cytoplasm. The enzyme catalyses N(6)-carboxybiotinyl-L-lysyl-[protein] + acetyl-CoA = N(6)-biotinyl-L-lysyl-[protein] + malonyl-CoA. The protein operates within lipid metabolism; malonyl-CoA biosynthesis; malonyl-CoA from acetyl-CoA: step 1/1. Component of the acetyl coenzyme A carboxylase (ACC) complex. Biotin carboxylase (BC) catalyzes the carboxylation of biotin on its carrier protein (BCCP) and then the CO(2) group is transferred by the transcarboxylase to acetyl-CoA to form malonyl-CoA. In Prosthecochloris aestuarii (strain DSM 271 / SK 413), this protein is Acetyl-coenzyme A carboxylase carboxyl transferase subunit beta.